Consider the following 651-residue polypeptide: Probable potassium transport system protein Kup (651 aa).

A run of 12 helical transmembrane segments spans residues 41–61 (LVLG…IYAF), 82–102 (VVSL…VLFV), 130–150 (LILG…VITP), 163–183 (IVAP…LVTL), 194–214 (VAIV…ASGL), 235–255 (FLTV…LAMT), 276–296 (WLWI…AFIL), 309–329 (MIPS…TVIA), 366–386 (IYIP…VLGF), 395–415 (AYGI…YIVM), 426–446 (ALPI…ANII), and 450–470 (EGGW…WTWV).

Belongs to the HAK/KUP transporter (TC 2.A.72) family.

Its subcellular location is the cell inner membrane. It catalyses the reaction K(+)(in) + H(+)(in) = K(+)(out) + H(+)(out). Functionally, transport of potassium into the cell. Likely operates as a K(+):H(+) symporter. This chain is Probable potassium transport system protein Kup, found in Brucella melitensis biotype 2 (strain ATCC 23457).